Consider the following 327-residue polypeptide: Putative HTH-type transcriptional regulatory protein MM_0444 (327 aa).

One can recognise an HTH cro/C1-type domain in the interval 132-190; that stretch reads LKKARTTQSMSLGTLASMVGVSRRTISKYEEEGMDASIDVVLHLEDIFGVELAKPIDIL. The segment at residues 143–162 is a DNA-binding region (H-T-H motif); the sequence is LGTLASMVGVSRRTISKYEE. Positions 195 to 214 are disordered; sequence SRKPRKKAEPEKEEPKGKPG. Residues 201–211 are compositionally biased toward basic and acidic residues; it reads KAEPEKEEPKG.

The protein is Putative HTH-type transcriptional regulatory protein MM_0444 of Methanosarcina mazei (strain ATCC BAA-159 / DSM 3647 / Goe1 / Go1 / JCM 11833 / OCM 88) (Methanosarcina frisia).